A 656-amino-acid chain; its full sequence is Acetyl-coenzyme A synthetase (656 aa).

Residues 198-201 and Thr316 contribute to the CoA site; that span reads RGGR. ATP contacts are provided by residues 392–394, 416–421, Asp507, and Arg522; these read GEP and DTFWQT. Ser530 contributes to the CoA binding site. Arg533 serves as a coordination point for ATP. The Mg(2+) site is built by Val544, His546, and Val549. Arg591 serves as a coordination point for CoA. An N6-acetyllysine modification is found at Lys616.

It belongs to the ATP-dependent AMP-binding enzyme family. Mg(2+) is required as a cofactor. Post-translationally, acetylated. Deacetylation by the SIR2-homolog deacetylase activates the enzyme.

The catalysed reaction is acetate + ATP + CoA = acetyl-CoA + AMP + diphosphate. Its function is as follows. Catalyzes the conversion of acetate into acetyl-CoA (AcCoA), an essential intermediate at the junction of anabolic and catabolic pathways. AcsA undergoes a two-step reaction. In the first half reaction, AcsA combines acetate with ATP to form acetyl-adenylate (AcAMP) intermediate. In the second half reaction, it can then transfer the acetyl group from AcAMP to the sulfhydryl group of CoA, forming the product AcCoA. The polypeptide is Acetyl-coenzyme A synthetase (Rhodobacter capsulatus (strain ATCC BAA-309 / NBRC 16581 / SB1003)).